The primary structure comprises 624 residues: MAARVLGQMVLAVLMASAVAGVAIAAIARVEWPAYNTSNQLHALTTVGQFGCLAGLFAAGLLWRRGRRTLARLGALAFISAFSVVTLAMPLGATKLYLFGVSVDQQFRTEYLTRLTDTAGLHDMTYIGLPPFYPAGWFWLGGRIAAATGTPAWEMFKPWSIVSITIAVALALVLWAAMIRFEYALVATAASTAAMLAYASTEPYAAIITVLMPPVFVLAWAGLRARTRGGGWAAIVGVGIFLGVAALFYTLLLVYAAFTLTIMALCVAVARRHIDPLLRLAVIAVISGAIALLTWAPYLLAAMRGEPADSGTAQHYLPDAGAELHFPMFSLTLHGALCMLGTVWLVVRARTSTRAGALAVAVVAVYAWSLLSMLTTLAGTTLLSFRLQPTLTVLLTTAGAFGFIEATLAIAHRYRPETSRRVVAAATAVGAIGAVTFSQDIPDVLRPDINVAYTDTDGTGQRADRRPPGAERYYREIDAKILEVTGVPRNQTVVLTADYSFLSFYPYYGFQGLTSHYANPLAQFDKRAAAIEGWATLGSADDFVAALDELPWEPPTVFLMRHGANDTYTLRLASDVYPNQPNVRRYHVELDSAVFDDPRFEVSDHGPFVLAIRKPGGKPETDGH.

13 consecutive transmembrane segments (helical) span residues 5–25 (VLGQMVLAVLMASAVAGVAIA), 43–63 (ALTTVGQFGCLAGLFAAGLLW), 73–93 (LGALAFISAFSVVTLAMPLGA), 127–147 (IGLPPFYPAGWFWLGGRIAAA), 159–179 (WSIVSITIAVALALVLWAAMI), 181–201 (FEYALVATAASTAAMLAYAST), 203–223 (PYAAIITVLMPPVFVLAWAGL), 234–254 (AIVGVGIFLGVAALFYTLLLV), 280–300 (LAVIAVISGAIALLTWAPYLL), 326–346 (FPMFSLTLHGALCMLGTVWLV), 355–375 (AGALAVAVVAVYAWSLLSMLT), 391–411 (LTVLLTTAGAFGFIEATLAIA), and 422–442 (VVAAATAVGAIGAVTFSQDIP).

The protein belongs to the glycosyltransferase 85 family.

The protein resides in the cell membrane. It catalyses the reaction Adds an alpha-D-arabinofuranosyl group from trans,octacis-decaprenylphospho-beta-D-arabinofuranose at the 5-O-position of the eighth, tenth and twelfth galactofuranose unit of the galactofuranan chain of [beta-D-galactofuranosyl-(1-&gt;5)-beta-D-galactofuranosyl-(1-&gt;6)]14-beta-D-galactofuranosyl-(1-&gt;5)-beta-D-galactofuranosyl-(1-&gt;4)-alpha-L-rhamnopyranosyl-(1-&gt;3)-N-acetyl-alpha-D-glucosaminyl-diphospho-trans,octacis-decaprenol.. It participates in cell wall biogenesis; cell wall polysaccharide biosynthesis. Functionally, involved in the biosynthesis of the arabinogalactan (AG) region of the mycolylarabinogalactan-peptidoglycan (mAGP) complex, an essential component of the mycobacterial cell wall. Catalyzes the addition of the first key arabinofuranosyl (Araf) residue from the sugar donor decaprenyl-phospho-arabinose (DPA) on the C-5 of a 6-linked galactofuranosyl (Galf) of the galactan domain, thus 'priming' the galactan for further elaboration by other arabinofuranosyltransferases. It is not able to add an Araf residue to a terminal Galf. The chain is Galactan 5-O-arabinofuranosyltransferase from Mycolicibacterium smegmatis (strain ATCC 700084 / mc(2)155) (Mycobacterium smegmatis).